Consider the following 166-residue polypeptide: Protein C2-DOMAIN ABA-RELATED 11 (166 aa).

The residue at position 1 (Met1) is an N-acetylmethionine. One can recognise a C2 domain in the interval 1–103 (MGEPLGLLQV…ISVARLRHVV (103 aa)). The residue at position 2 (Gly2) is an N-acetylglycine; in Protein C2-DOMAIN ABA-RELATED 11, N-terminally processed. 7 residues coordinate Ca(2+): Arg21, Asp22, Asp27, Asp73, Lys74, Asp75, and Asp81.

This sequence belongs to the plant CAR protein family. In terms of assembly, binds to PYR/PYL/RCAR abscisic acid intracellular receptors in an ABA-independent manner, both at the plasma membrane and in the nucleus.

It is found in the cell membrane. It localises to the nucleus. Its function is as follows. Stimulates the GTPase/ATPase activities of Obg-like ATPases. Mediates the transient calcium-dependent interaction of PYR/PYL/RCAR abscisic acid (ABA) receptors with the plasma membrane and thus regulates ABA sensitivity. This Arabidopsis thaliana (Mouse-ear cress) protein is Protein C2-DOMAIN ABA-RELATED 11.